The sequence spans 157 residues: Beta-defensin 125 (157 aa).

A signal peptide spans 1–20 (MNLLMLTFIICGLLTQVTKG). Intrachain disulfides connect Cys27–Cys55, Cys35–Cys49, and Cys39–Cys56. The disordered stretch occupies residues 109–157 (GETITPETNTPETTMPPSETTSSKTTMPPSETATSETMPPPSQTALTHN). Residues 110 to 140 (ETITPETNTPETTMPPSETTSSKTTMPPSET) are compositionally biased toward low complexity. A compositionally biased stretch (polar residues) spans 141–157 (ATSETMPPPSQTALTHN).

This sequence belongs to the beta-defensin family.

Its subcellular location is the secreted. Its function is as follows. Has antibacterial activity. This chain is Beta-defensin 125 (DEFB125), found in Pongo pygmaeus (Bornean orangutan).